The chain runs to 314 residues: GTP cyclohydrolase FolE2 (314 aa).

Residues 290–314 (DASAWSAPQASAPDQQESFATGNER) form a disordered region. A compositionally biased stretch (low complexity) spans 291-305 (ASAWSAPQASAPDQQ).

This sequence belongs to the GTP cyclohydrolase IV family.

The catalysed reaction is GTP + H2O = 7,8-dihydroneopterin 3'-triphosphate + formate + H(+). It participates in cofactor biosynthesis; 7,8-dihydroneopterin triphosphate biosynthesis; 7,8-dihydroneopterin triphosphate from GTP: step 1/1. Converts GTP to 7,8-dihydroneopterin triphosphate. The chain is GTP cyclohydrolase FolE2 from Pseudomonas putida (strain ATCC 700007 / DSM 6899 / JCM 31910 / BCRC 17059 / LMG 24140 / F1).